Here is a 142-residue protein sequence, read N- to C-terminus: Inner membrane protein YqaA (142 aa).

The Cytoplasmic segment spans residues 1-2 (MS). A helical membrane pass occupies residues 3 to 23 (EALSLFSLFASSFLSATLLPG). The Periplasmic portion of the chain corresponds to 24–26 (NSE). A helical membrane pass occupies residues 27 to 47 (VVLVAMLLSGISHPWVLVLTA). At 48-86 (TMGNSLGGLTNVILGRFFPLRKTSRWQEKATGWLKRYGA) the chain is on the cytoplasmic side. A helical transmembrane segment spans residues 87–107 (VTLLLSWMPVVGDLLCLLAGW). Over 108 to 142 (MRISWGPVIFFLCLGKALRYVAVAAATVQGMMWWH) the chain is Periplasmic.

To H.influenzae HI_0489.

It is found in the cell inner membrane. This chain is Inner membrane protein YqaA (yqaA), found in Escherichia coli (strain K12).